Consider the following 190-residue polypeptide: MIIITDTAQKYLTTLLAKQKSGTQIRVLVLNPGTPIAECSLSYCPIDTVTKKDIKLEFDQFCVYVDQLSTSYLEDALIDCVLDELGTQLIIQAPHLIEKIDSNTPLLERVNQIILSCINPQLANHGGKVTLITITEDMFAIIQFSGGCNGCSMVSYTLKEHIEKKLLQLFPELKGVKDLTQHNHSQYSFY.

[4Fe-4S] cluster contacts are provided by cysteine 148 and cysteine 151.

This sequence belongs to the NfuA family. In terms of assembly, homodimer. [4Fe-4S] cluster is required as a cofactor.

Its function is as follows. Involved in iron-sulfur cluster biogenesis. Binds a 4Fe-4S cluster, can transfer this cluster to apoproteins, and thereby intervenes in the maturation of Fe/S proteins. Could also act as a scaffold/chaperone for damaged Fe/S proteins. The chain is Fe/S biogenesis protein NfuA from Baumannia cicadellinicola subsp. Homalodisca coagulata.